Reading from the N-terminus, the 38-residue chain is Large ribosomal subunit protein bL36 (38 aa).

Belongs to the bacterial ribosomal protein bL36 family.

The sequence is that of Large ribosomal subunit protein bL36 from Porphyromonas gingivalis (strain ATCC 33277 / DSM 20709 / CIP 103683 / JCM 12257 / NCTC 11834 / 2561).